Here is a 93-residue protein sequence, read N- to C-terminus: Co-chaperonin GroES (93 aa).

The protein belongs to the GroES chaperonin family. As to quaternary structure, heptamer of 7 subunits arranged in a ring. Interacts with the chaperonin GroEL.

Its subcellular location is the cytoplasm. In terms of biological role, together with the chaperonin GroEL, plays an essential role in assisting protein folding. The GroEL-GroES system forms a nano-cage that allows encapsulation of the non-native substrate proteins and provides a physical environment optimized to promote and accelerate protein folding. GroES binds to the apical surface of the GroEL ring, thereby capping the opening of the GroEL channel. The protein is Co-chaperonin GroES of Streptococcus anginosus.